A 669-amino-acid polypeptide reads, in one-letter code: Glutamate--cysteine ligase (669 aa).

This sequence belongs to the glutamate--cysteine ligase type 3 family. As to quaternary structure, heterodimer of a catalytic heavy chain and a regulatory light chain.

It carries out the reaction L-cysteine + L-glutamate + ATP = gamma-L-glutamyl-L-cysteine + ADP + phosphate + H(+). Its pathway is sulfur metabolism; glutathione biosynthesis; glutathione from L-cysteine and L-glutamate: step 1/2. In terms of biological role, catalyzes the ATP-dependent ligation of L-glutamate and L-cysteine and participates in the first and rate-limiting step in glutathione biosynthesis. The polypeptide is Glutamate--cysteine ligase (gcs1) (Schizosaccharomyces pombe (strain 972 / ATCC 24843) (Fission yeast)).